Here is a 300-residue protein sequence, read N- to C-terminus: Ribosomal protein L11 methyltransferase (300 aa).

4 residues coordinate S-adenosyl-L-methionine: T152, G173, D195, and N234.

Belongs to the methyltransferase superfamily. PrmA family.

The protein resides in the cytoplasm. The enzyme catalyses L-lysyl-[protein] + 3 S-adenosyl-L-methionine = N(6),N(6),N(6)-trimethyl-L-lysyl-[protein] + 3 S-adenosyl-L-homocysteine + 3 H(+). In terms of biological role, methylates ribosomal protein L11. The chain is Ribosomal protein L11 methyltransferase from Burkholderia multivorans (strain ATCC 17616 / 249).